A 1394-amino-acid chain; its full sequence is Kinesin-like protein KIF27 (1394 aa).

The Kinesin motor domain maps to 5–341 (PIKVAVRIRP…LKYANRARNI (337 aa)). Residue 84 to 91 (GQTGSGKT) participates in ATP binding. 2 coiled-coil regions span residues 352-418 (QADR…IEQA) and 493-554 (QVVF…ELAK). Disordered stretches follow at residues 551–583 (ELAK…PHTA) and 642–664 (FSDN…SRSH). A compositionally biased stretch (polar residues) spans 555–565 (RSSSMPTSTKE). The span at 571–580 (PDARAPEKRP) shows a compositional bias: basic and acidic residues. Phosphoserine occurs at positions 643, 646, 672, 675, and 704. Positions 709–980 (LQKLRTSELI…NKKLRSSQAL (272 aa)) form a coiled coil. Position 999 is a phosphoserine (Ser-999). Coiled-coil stretches lie at residues 1010 to 1078 (TEEK…SIQN), 1118 to 1152 (NKVI…HELE), and 1187 to 1226 (QDGE…RLKD). Over residues 1267–1280 (TENTKLNGREKEVD) the composition is skewed to basic and acidic residues. Positions 1267–1340 (TENTKLNGRE…SQSPPPPQLQ (74 aa)) are disordered. Composition is skewed to polar residues over residues 1281-1295 (NSSS…TQQI) and 1310-1320 (APSSGQLQSSA). Phosphoserine occurs at positions 1365 and 1387. The disordered stretch occupies residues 1375 to 1394 (SLGAGVRSVTADSLEEPEES).

The protein belongs to the TRAFAC class myosin-kinesin ATPase superfamily. Kinesin family. KIF27 subfamily. In terms of assembly, interacts with STK36.

It is found in the cytoplasm. Its subcellular location is the cytoskeleton. The protein resides in the cell projection. It localises to the cilium. In terms of biological role, plays an essential role in motile ciliogenesis. The sequence is that of Kinesin-like protein KIF27 (Kif27) from Rattus norvegicus (Rat).